Consider the following 237-residue polypeptide: N-(5'-phosphoribosyl)anthranilate isomerase (237 aa).

It belongs to the TrpF family.

The enzyme catalyses N-(5-phospho-beta-D-ribosyl)anthranilate = 1-(2-carboxyphenylamino)-1-deoxy-D-ribulose 5-phosphate. Its pathway is amino-acid biosynthesis; L-tryptophan biosynthesis; L-tryptophan from chorismate: step 3/5. The polypeptide is N-(5'-phosphoribosyl)anthranilate isomerase (TRP1) (Komagataella pastoris (Yeast)).